A 470-amino-acid polypeptide reads, in one-letter code: Glucose-1-phosphate adenylyltransferase large subunit 1 (470 aa).

The protein belongs to the bacterial/plant glucose-1-phosphate adenylyltransferase family. Heterotetramer. Prominently expressed in the leaves and a weaker expression is seen in the tubers.

The protein localises to the plastid. It localises to the chloroplast. It is found in the amyloplast. The catalysed reaction is alpha-D-glucose 1-phosphate + ATP + H(+) = ADP-alpha-D-glucose + diphosphate. It participates in glycan biosynthesis; starch biosynthesis. With respect to regulation, activated by 3'phosphoglycerate, inhibited by orthophosphate. Allosteric regulation. Its function is as follows. This protein plays a role in synthesis of starch. It catalyzes the synthesis of the activated glycosyl donor, ADP-glucose from Glc-1-P and ATP. The sequence is that of Glucose-1-phosphate adenylyltransferase large subunit 1 (AGPS1) from Solanum tuberosum (Potato).